The primary structure comprises 196 residues: Imidazoleglycerol-phosphate dehydratase (196 aa).

Belongs to the imidazoleglycerol-phosphate dehydratase family.

It is found in the cytoplasm. It catalyses the reaction D-erythro-1-(imidazol-4-yl)glycerol 3-phosphate = 3-(imidazol-4-yl)-2-oxopropyl phosphate + H2O. The protein operates within amino-acid biosynthesis; L-histidine biosynthesis; L-histidine from 5-phospho-alpha-D-ribose 1-diphosphate: step 6/9. This is Imidazoleglycerol-phosphate dehydratase from Clostridium botulinum (strain ATCC 19397 / Type A).